The following is a 936-amino-acid chain: Phosphoenolpyruvate carboxylase (936 aa).

Active-site residues include His155 and Lys595.

Belongs to the PEPCase type 1 family. As to quaternary structure, homotetramer. The cofactor is Mg(2+). Mn(2+) serves as cofactor.

The enzyme catalyses oxaloacetate + phosphate = phosphoenolpyruvate + hydrogencarbonate. Exhibits positive allosteric property with acetyl-CoA and fructose 1,6-bisphosphate, and a negative one with L-aspartate and L-malate. Its function is as follows. Forms oxaloacetate, a four-carbon dicarboxylic acid source for the tricarboxylic acid cycle. In Rhodothermus marinus (Rhodothermus obamensis), this protein is Phosphoenolpyruvate carboxylase (ppc).